Consider the following 272-residue polypeptide: MRDKVNINTVDISQLEVFFQPAKKPAKQTIVFAHGFSVHHSYFKSFSETLVDYDYYAPLWPGHNHHGFTDKELSPIHYAHLLVAWIEKQDLENIVLIGHSMGGAVASYALQFLKPQRVEKLVLLAPLSYSNLLNYYKIKKAFKKKDEKLSYFKRMFQPKFPDLQNDGQWQMELDKHTAMCKKLTFQIFKELSRLNSAYKTITIPAFLLLAQHDDFMPTKATLNYFNRFLIKKGNLQSGVILHSQHQMFNSKHESFCKAMHDILKHNKLSKIY.

The active site involves histidine 34. Catalysis depends on serine 100, which acts as the Charge relay system.

This sequence belongs to the lipase/esterase LIP3/BchO family.

The protein is Putative esterase/lipase 3 of Mycoplasma pneumoniae (strain ATCC 29342 / M129 / Subtype 1) (Mycoplasmoides pneumoniae).